The sequence spans 116 residues: Large ribosomal subunit protein uL14m (116 aa).

Belongs to the universal ribosomal protein uL14 family.

Its subcellular location is the mitochondrion. The sequence is that of Large ribosomal subunit protein uL14m (RPL14) from Acanthamoeba polyphaga (Amoeba).